A 168-amino-acid chain; its full sequence is Sec-independent protein translocase protein TatB (168 aa).

Residues 1–21 traverse the membrane as a helical segment; that stretch reads MIDLGISKLALIGAVALIVIG. Disordered regions lie at residues 92-132 and 146-168; these read FDGS…QGAR and VQSGAARVKRHRPASGRNRSFFE. Residues 94–107 show a composition bias toward low complexity; the sequence is GSASSSSSSDTGSG. The span at 117-126 shows a compositional bias: basic residues; the sequence is KSHNGRKSWR.

The protein belongs to the TatB family. The Tat system comprises two distinct complexes: a TatABC complex, containing multiple copies of TatA, TatB and TatC subunits, and a separate TatA complex, containing only TatA subunits. Substrates initially bind to the TatABC complex, which probably triggers association of the separate TatA complex to form the active translocon.

It localises to the cell inner membrane. Its function is as follows. Part of the twin-arginine translocation (Tat) system that transports large folded proteins containing a characteristic twin-arginine motif in their signal peptide across membranes. Together with TatC, TatB is part of a receptor directly interacting with Tat signal peptides. TatB may form an oligomeric binding site that transiently accommodates folded Tat precursor proteins before their translocation. This chain is Sec-independent protein translocase protein TatB, found in Cupriavidus metallidurans (strain ATCC 43123 / DSM 2839 / NBRC 102507 / CH34) (Ralstonia metallidurans).